Reading from the N-terminus, the 376-residue chain is c-di-GMP synthase (376 aa).

Belongs to the CD-NTase family. G05 subfamily.

It catalyses the reaction 2 GTP = 3',3'-c-di-GMP + 2 diphosphate. Its function is as follows. Cyclic nucleotide synthase (second messenger synthase) of a CBASS antivirus system. CBASS (cyclic oligonucleotide-based antiphage signaling system) provides immunity against bacteriophage. The CD-NTase protein synthesizes cyclic nucleotides in response to infection; these serve as specific second messenger signals. The signals activate a diverse range of effectors, leading to bacterial cell death and thus abortive phage infection. A type I-D CBASS(GG) system. Functionally, cyclic dinucleotide synthase that catalyzes the synthesis of c-di-GMP, has no activity with other NTP substrates. The chain is c-di-GMP synthase from Roseivirga ehrenbergii (strain DSM 102268 / JCM 13514 / KCTC 12282 / NCIMB 14502 / KMM 6017).